The following is a 607-amino-acid chain: Elongation factor 4 (607 aa).

The tr-type G domain occupies K11 to E193. Residues D23–T28 and N140–D143 each bind GTP.

Belongs to the TRAFAC class translation factor GTPase superfamily. Classic translation factor GTPase family. LepA subfamily.

It localises to the cell membrane. It carries out the reaction GTP + H2O = GDP + phosphate + H(+). Required for accurate and efficient protein synthesis under certain stress conditions. May act as a fidelity factor of the translation reaction, by catalyzing a one-codon backward translocation of tRNAs on improperly translocated ribosomes. Back-translocation proceeds from a post-translocation (POST) complex to a pre-translocation (PRE) complex, thus giving elongation factor G a second chance to translocate the tRNAs correctly. Binds to ribosomes in a GTP-dependent manner. In Staphylococcus saprophyticus subsp. saprophyticus (strain ATCC 15305 / DSM 20229 / NCIMB 8711 / NCTC 7292 / S-41), this protein is Elongation factor 4.